Reading from the N-terminus, the 546-residue chain is Parathyroid hormone 2 receptor (546 aa).

Positions 1–24 (MAWLETFTYICGWLILSSCLLVRA) are cleaved as a signal peptide. Residues 27 to 143 (DSDGTITIEE…GKQEFFESLY (117 aa)) lie on the Extracellular side of the membrane. Asn-51, Asn-106, Asn-116, and Asn-121 each carry an N-linked (GlcNAc...) asparagine glycan. The helical transmembrane segment at 144–167 (ILYTVGYSISFGSLAVAILIIGYF) threads the bilayer. Topologically, residues 168-174 (RRLHCTR) are cytoplasmic. A helical membrane pass occupies residues 175-194 (NYIHLHLFVSFMLRAMSIFV). The Extracellular segment spans residues 195–235 (KDRVAQAHLGVEALQSLVMQGDLQNFIGGPSVDKSQYVGCK). The helical transmembrane segment at 236–258 (IAVVMFIYFLATNYYWILVEGLY) threads the bilayer. At 259–273 (LHNLIFVSFFSDTKY) the chain is on the cytoplasmic side. Residues 274 to 295 (LWGFISIGWGFPAVFVVAWAVA) traverse the membrane as a helical segment. Over 296-313 (RATLADTRCWELSAGDRW) the chain is Extracellular. The helical transmembrane segment at 314 to 334 (IYQAPILAAIGLNFILFLNTV) threads the bilayer. At 335–361 (RVLATKIWETNAVGHDMRKQYRKLAKS) the chain is on the cytoplasmic side. The chain crosses the membrane as a helical span at residues 362–380 (TLVLVLVFGVHYIVFVCQP). Residues 381–391 (HSFSGLWWEIR) are Extracellular-facing. A helical transmembrane segment spans residues 392 to 414 (MHCELFFNSFQGFFVSIVYCYCN). At 415 to 546 (GEVQAEVKKM…EGCKGETHPI (132 aa)) the chain is on the cytoplasmic side. Residues 497 to 546 (SEQDCQTHSPPEETKEGHRRQGDDSPVMESSRPVAFTLDTEGCKGETHPI) are disordered. Composition is skewed to basic and acidic residues over residues 506-519 (PPEE…RQGD) and 537-546 (EGCKGETHPI).

Belongs to the G-protein coupled receptor 2 family. Binds to TIPF39/TIP39.

The protein localises to the cell membrane. Its function is as follows. This is a specific receptor for parathyroid hormone. The activity of this receptor is mediated by G proteins which activate adenylyl cyclase. PTH2R may be responsible for PTH effects in a number of physiological systems. It may play a significant role in pancreatic function. PTH2R presence in neurons indicates that it may function as a neurotransmitter receptor. The polypeptide is Parathyroid hormone 2 receptor (Pth2r) (Mus musculus (Mouse)).